The primary structure comprises 350 residues: Protein-arginine kinase (350 aa).

A Phosphagen kinase C-terminal domain is found at 21-253 (IVISSRIRLA…VRLADQEREA (233 aa)). ATP contacts are provided by residues 24 to 28 (SSRIR), His-90, Arg-124, 175 to 179 (RASTM), and 206 to 211 (RGLYGE). An RDXXRA motif of the pArg binding pocket involved in allosteric regulation motif is present at residues 336–341 (RDVHRA).

This sequence belongs to the ATP:guanido phosphotransferase family.

The catalysed reaction is L-arginyl-[protein] + ATP = N(omega)-phospho-L-arginyl-[protein] + ADP + H(+). Appears to be allosterically activated by the binding of pArg-containing polypeptides to the pArg-binding pocket localized in the C-terminal domain of McsB. Functionally, catalyzes the specific phosphorylation of arginine residues in proteins. This Moorella thermoacetica (strain ATCC 39073 / JCM 9320) protein is Protein-arginine kinase.